A 132-amino-acid chain; its full sequence is CDGSH iron-sulfur domain-containing protein 2 homolog (132 aa).

Residues 1–35 (MEPISHVVKSSLPNYLSSLPIPDSFGGWFKLSFKD) lie on the Lumenal side of the membrane. The chain crosses the membrane as a helical span at residues 36–58 (WLALIPPTVVVAGLGYTTYLAFC). At 59–132 (PAARCAGKDS…NVGPVVVKKK (74 aa)) the chain is on the cytoplasmic side. Cysteine 98, cysteine 100, cysteine 109, and histidine 113 together coordinate [2Fe-2S] cluster.

This sequence belongs to the CISD protein family. CISD2 subfamily. Requires [2Fe-2S] cluster as cofactor.

It localises to the endoplasmic reticulum membrane. The polypeptide is CDGSH iron-sulfur domain-containing protein 2 homolog (Drosophila persimilis (Fruit fly)).